A 330-amino-acid polypeptide reads, in one-letter code: Glycerol-3-phosphate dehydrogenase [NAD(P)+] (330 aa).

Residues tryptophan 13, arginine 33, and lysine 103 each coordinate NADPH. Residues lysine 103, glycine 131, and threonine 133 each contribute to the sn-glycerol 3-phosphate site. Alanine 135 provides a ligand contact to NADPH. Lysine 186, aspartate 239, serine 249, arginine 250, and asparagine 251 together coordinate sn-glycerol 3-phosphate. The active-site Proton acceptor is the lysine 186. Arginine 250 provides a ligand contact to NADPH. 2 residues coordinate NADPH: valine 274 and glutamate 276.

It belongs to the NAD-dependent glycerol-3-phosphate dehydrogenase family.

The protein localises to the cytoplasm. It catalyses the reaction sn-glycerol 3-phosphate + NAD(+) = dihydroxyacetone phosphate + NADH + H(+). The enzyme catalyses sn-glycerol 3-phosphate + NADP(+) = dihydroxyacetone phosphate + NADPH + H(+). It functions in the pathway membrane lipid metabolism; glycerophospholipid metabolism. Functionally, catalyzes the reduction of the glycolytic intermediate dihydroxyacetone phosphate (DHAP) to sn-glycerol 3-phosphate (G3P), the key precursor for phospholipid synthesis. In Erythrobacter litoralis (strain HTCC2594), this protein is Glycerol-3-phosphate dehydrogenase [NAD(P)+].